The primary structure comprises 234 residues: Ubiquinone biosynthesis O-methyltransferase (234 aa).

Positions 40, 59, 80, and 123 each coordinate S-adenosyl-L-methionine.

This sequence belongs to the methyltransferase superfamily. UbiG/COQ3 family.

It carries out the reaction a 3-demethylubiquinol + S-adenosyl-L-methionine = a ubiquinol + S-adenosyl-L-homocysteine + H(+). It catalyses the reaction a 3-(all-trans-polyprenyl)benzene-1,2-diol + S-adenosyl-L-methionine = a 2-methoxy-6-(all-trans-polyprenyl)phenol + S-adenosyl-L-homocysteine + H(+). It functions in the pathway cofactor biosynthesis; ubiquinone biosynthesis. O-methyltransferase that catalyzes the 2 O-methylation steps in the ubiquinone biosynthetic pathway. The protein is Ubiquinone biosynthesis O-methyltransferase of Coxiella burnetii (strain CbuG_Q212) (Coxiella burnetii (strain Q212)).